We begin with the raw amino-acid sequence, 82 residues long: RNA-binding protein Hfq (82 aa).

The Sm domain occupies 10 to 69 (DPFLNALRREHVPVSIYLVNGIKLQGQIESFDQYVVLLRNTVTQMVYKHAISTIVPGRAV).

It belongs to the Hfq family. Homohexamer.

Functionally, RNA chaperone that binds small regulatory RNA (sRNAs) and mRNAs to facilitate mRNA translational regulation in response to envelope stress, environmental stress and changes in metabolite concentrations. Also binds with high specificity to tRNAs. The polypeptide is RNA-binding protein Hfq (Albidiferax ferrireducens (strain ATCC BAA-621 / DSM 15236 / T118) (Rhodoferax ferrireducens)).